The chain runs to 881 residues: Alanine--tRNA ligase (881 aa).

Residues 422-440 (FEDEMQKQKERARSARSTE) show a composition bias toward basic and acidic residues. Positions 422–445 (FEDEMQKQKERARSARSTEKSMGV) are disordered. The Zn(2+) site is built by His-567, His-571, Cys-669, and His-673.

This sequence belongs to the class-II aminoacyl-tRNA synthetase family. Zn(2+) is required as a cofactor.

The protein resides in the cytoplasm. It carries out the reaction tRNA(Ala) + L-alanine + ATP = L-alanyl-tRNA(Ala) + AMP + diphosphate. Its function is as follows. Catalyzes the attachment of alanine to tRNA(Ala) in a two-step reaction: alanine is first activated by ATP to form Ala-AMP and then transferred to the acceptor end of tRNA(Ala). Also edits incorrectly charged Ser-tRNA(Ala) and Gly-tRNA(Ala) via its editing domain. This Pediococcus pentosaceus (strain ATCC 25745 / CCUG 21536 / LMG 10740 / 183-1w) protein is Alanine--tRNA ligase.